Here is a 125-residue protein sequence, read N- to C-terminus: uncharacterized protein (125 aa).

This is an uncharacterized protein from Methanocaldococcus jannaschii (strain ATCC 43067 / DSM 2661 / JAL-1 / JCM 10045 / NBRC 100440) (Methanococcus jannaschii).